The sequence spans 607 residues: Protein PLASTID MOVEMENT IMPAIRED 2 (607 aa).

Coiled-coil stretches lie at residues 66–295 and 329–445; these read KAKK…NAEL and MLER…ESRR.

This sequence belongs to the WEB family. Interacts with WEB1. As to expression, ubiquitous but preferentially in chloroplast-containing tissues.

It is found in the cytoplasm. Its function is as follows. Required for the chloroplast avoidance response under high intensity blue light. This avoidance response consists in the relocation of chloroplasts on the anticlinal side of exposed cells. Acts in association with WEB1 to maintain the velocity of chloroplast photorelocation movement via cp-actin filaments regulation. This Arabidopsis thaliana (Mouse-ear cress) protein is Protein PLASTID MOVEMENT IMPAIRED 2 (PMI2).